A 173-amino-acid chain; its full sequence is Alpha-crystallin A chain (173 aa).

M1 bears the N-acetylmethionine mark. Residues 1–63 are required for complex formation with BFSP1 and BFSP2; during homooligomerization, mediates the association of 2 dimers to form a tetramer; that stretch reads MDVTIQHPWF…RTVLDSGISE (63 aa). Q6 is subject to Deamidated glutamine; partial. S45 is modified (phosphoserine). The residue at position 50 (Q50) is a Deamidated glutamine; partial. Residues 52-164 enclose the sHSP domain; it reads LFRTVLDSGI…AERAIPVSRE (113 aa). The residue at position 70 (K70) is an N6-acetyllysine. Q90 carries the deamidated glutamine; partial modification. K99 carries the N6-acetyllysine modification. Residue H100 participates in Zn(2+) binding. Residue N101 is modified to Deamidated asparagine; partial. Positions 102 and 107 each coordinate Zn(2+). The residue at position 122 (S122) is a Phosphoserine. N123 carries the post-translational modification Deamidated asparagine; partial. The cysteines at positions 131 and 142 are disulfide-linked. A Deamidated glutamine; partial modification is found at Q147. H154 serves as a coordination point for Zn(2+). A glycan (O-linked (GlcNAc) serine) is linked at S162.

Belongs to the small heat shock protein (HSP20) family. Heteropolymer composed of three CRYAA and one CRYAB subunits. Inter-subunit bridging via zinc ions enhances stability, which is crucial as there is no protein turn over in the lens. Can also form homodimers and homotetramers (dimers of dimers) which serve as the building blocks of homooligomers. Within homooligomers, the zinc-binding motif is created from residues of 3 different molecules. His-100 and Glu-102 from one molecule are ligands of the zinc ion, and His-107 and His-154 residues from additional molecules complete the site with tetrahedral coordination geometry. Part of a complex required for lens intermediate filament formation composed of BFSP1, BFSP2 and CRYAA. Post-translationally, O-glycosylated; contains N-acetylglucosamine side chains. Deamidation of Asn-101 in lens occurs mostly during the first 30 years of age, followed by a small additional amount of deamidation (approximately 5%) during the next approximately 38 years, resulting in a maximum of approximately 50% deamidation during the lifetime of the individual. In terms of processing, phosphorylation on Ser-122 seems to be developmentally regulated. Absent in the first months of life, it appears during the first 12 years of human lifetime. The relative amount of phosphorylated form versus unphosphorylated form does not change over the lifetime of the individual. Post-translationally, acetylation at Lys-70 may increase chaperone activity. Undergoes age-dependent proteolytical cleavage at the C-terminus. Alpha-crystallin A(1-172) is the most predominant form produced most rapidly during the first 12 years of age and after this age is present in approximately 50% of the lens molecules. In terms of processing, in young individuals and during the first approximately 30 years of life, less than half molecules contain an intramolecular disulfide bond (oxidized form), while in the remaining fraction the cysteines are in the free sulfhydryl form (reduced form). With aging, the amount of oxidized form increases up to 90% and it becomes a major constituent of high molecular weight aggregates, concomitant with an age-dependent loss of its chaperone activity. The reduced form is undetectable in cataractous lenses. In terms of tissue distribution, expressed in the eye lens (at protein level).

It is found in the cytoplasm. The protein localises to the nucleus. Contributes to the transparency and refractive index of the lens. In its oxidized form (absence of intramolecular disulfide bond), acts as a chaperone, preventing aggregation of various proteins under a wide range of stress conditions. Required for the correct formation of lens intermediate filaments as part of a complex composed of BFSP1, BFSP2 and CRYAA. This chain is Alpha-crystallin A chain (CRYAA), found in Homo sapiens (Human).